The following is a 299-amino-acid chain: Nucleotide-binding protein SCO1952 (299 aa).

An ATP-binding site is contributed by 23-30; the sequence is GMSGAGRS. 74–77 is a binding site for GTP; sequence DVRG.

Belongs to the RapZ-like family.

Functionally, displays ATPase and GTPase activities. The sequence is that of Nucleotide-binding protein SCO1952 from Streptomyces coelicolor (strain ATCC BAA-471 / A3(2) / M145).